We begin with the raw amino-acid sequence, 318 residues long: MKPLDRIHEAAKALDRHIILPEGEDPRVAEAARRLLAAGLARVTLMGGPEIPGAGRIDPAGGPDLAELADHWHRMRAARGMTAERALTEMRDPIRQAAMRVRLGQADGTVGGAVATTADTVRAALQIIGKAPGAGIVSSFFLMLSCGPGAPVRGGMIFADCGLVIQPDARELAAIALSAADSCRRILAEEPRVALLSFSTAGSAEHPSLGRIREALALIRAAAPGLEVDGEMQFDAALDEAIRARKAPESPLTGRPNVFVFPDLADGNIGYKIAERLAGLTAIGPILQGLAKPANDLSRACSVKDIVNATAITAMQTK.

Belongs to the phosphate acetyltransferase and butyryltransferase family.

It is found in the cytoplasm. It carries out the reaction acetyl-CoA + phosphate = acetyl phosphate + CoA. The protein operates within metabolic intermediate biosynthesis; acetyl-CoA biosynthesis; acetyl-CoA from acetate: step 2/2. This chain is Phosphate acetyltransferase (pta), found in Paracoccus denitrificans.